Here is a 111-residue protein sequence, read N- to C-terminus: Nucleoid-associated protein VF_1686 (111 aa).

2 disordered regions span residues 1-23 and 89-111; these read MFGG…DRMQ and TQKE…KMPF.

This sequence belongs to the YbaB/EbfC family. Homodimer.

It localises to the cytoplasm. The protein resides in the nucleoid. Functionally, binds to DNA and alters its conformation. May be involved in regulation of gene expression, nucleoid organization and DNA protection. This is Nucleoid-associated protein VF_1686 from Aliivibrio fischeri (strain ATCC 700601 / ES114) (Vibrio fischeri).